Reading from the N-terminus, the 430-residue chain is tRNA(Ile)-lysidine synthase (430 aa).

Position 24-29 (24-29) interacts with ATP; the sequence is SGGLDS.

Belongs to the tRNA(Ile)-lysidine synthase family.

It is found in the cytoplasm. It catalyses the reaction cytidine(34) in tRNA(Ile2) + L-lysine + ATP = lysidine(34) in tRNA(Ile2) + AMP + diphosphate + H(+). In terms of biological role, ligates lysine onto the cytidine present at position 34 of the AUA codon-specific tRNA(Ile) that contains the anticodon CAU, in an ATP-dependent manner. Cytidine is converted to lysidine, thus changing the amino acid specificity of the tRNA from methionine to isoleucine. This is tRNA(Ile)-lysidine synthase from Haemophilus influenzae (strain ATCC 51907 / DSM 11121 / KW20 / Rd).